The chain runs to 447 residues: Na(+)-translocating NADH-quinone reductase subunit A (447 aa).

It belongs to the NqrA family. As to quaternary structure, composed of six subunits; NqrA, NqrB, NqrC, NqrD, NqrE and NqrF.

It carries out the reaction a ubiquinone + n Na(+)(in) + NADH + H(+) = a ubiquinol + n Na(+)(out) + NAD(+). Its function is as follows. NQR complex catalyzes the reduction of ubiquinone-1 to ubiquinol by two successive reactions, coupled with the transport of Na(+) ions from the cytoplasm to the periplasm. NqrA to NqrE are probably involved in the second step, the conversion of ubisemiquinone to ubiquinol. This Yersinia pestis bv. Antiqua (strain Angola) protein is Na(+)-translocating NADH-quinone reductase subunit A.